Consider the following 497-residue polypeptide: Dihydrolipoyl dehydrogenase (497 aa).

FAD contacts are provided by residues 60 to 69, Lys-78, Gly-142, and 170 to 172; these read EKEPSLGGTC and TGS. Residues Cys-69 and Cys-74 are joined by a disulfide bond. Residues 207-214, Glu-230, Val-264, and Gly-302 each bind NAD(+); that span reads GAGVIGLE. Residues Asp-343 and 349 to 352 contribute to the FAD site; that span reads MLAH. His-475 (proton acceptor) is an active-site residue.

This sequence belongs to the class-I pyridine nucleotide-disulfide oxidoreductase family. Homodimer. The cofactor is FAD.

The protein localises to the cytoplasm. The enzyme catalyses N(6)-[(R)-dihydrolipoyl]-L-lysyl-[protein] + NAD(+) = N(6)-[(R)-lipoyl]-L-lysyl-[protein] + NADH + H(+). The protein is Dihydrolipoyl dehydrogenase of Manduca sexta (Tobacco hawkmoth).